Consider the following 334-residue polypeptide: Anthranilate phosphoribosyltransferase (334 aa).

5-phospho-alpha-D-ribose 1-diphosphate is bound by residues G81, 84-85, T89, 91-94, 109-117, and A121; these read GD, NIST, and KHGSRSVSS. G81 lines the anthranilate pocket. S93 lines the Mg(2+) pocket. R167 is a binding site for anthranilate. 2 residues coordinate Mg(2+): D225 and E226.

Belongs to the anthranilate phosphoribosyltransferase family. In terms of assembly, homodimer. Requires Mg(2+) as cofactor.

The catalysed reaction is N-(5-phospho-beta-D-ribosyl)anthranilate + diphosphate = 5-phospho-alpha-D-ribose 1-diphosphate + anthranilate. It functions in the pathway amino-acid biosynthesis; L-tryptophan biosynthesis; L-tryptophan from chorismate: step 2/5. In terms of biological role, catalyzes the transfer of the phosphoribosyl group of 5-phosphorylribose-1-pyrophosphate (PRPP) to anthranilate to yield N-(5'-phosphoribosyl)-anthranilate (PRA). This is Anthranilate phosphoribosyltransferase from Actinobacillus pleuropneumoniae serotype 5b (strain L20).